The chain runs to 300 residues: MNQSYGRLVSRAAIAATAMASALLLIKIFAWWYTGSVSILAALVDSLVDIAASLTNLLVVRYSLQPADEEHTFGHGKAESLAALAQSMFISGSALFLFLTGIQHLVRPEPLQAAGVGVVVTLIALFSTLALVTFQRWVVRKTQSQAVRADMLHYQSDVMMNGAILVALGLSWYGWHRADALFALGIGIYILYSALRMGYEAVQSLLDRALPDEERQDIITIVTAWPGIRGAHDLRTRQSGPTRFIQIHLEMEDNLPLVQAHVIADQVEQAILRRFPGSDVIIHQDPSSVVPAAQQGFFER.

A helical membrane pass occupies residues 24 to 44; that stretch reads LLIKIFAWWYTGSVSILAALV. Zn(2+) contacts are provided by Asp45 and Asp49. A run of 2 helical transmembrane segments spans residues 82-102 and 114-134; these read AALAQSMFISGSALFLFLTGI and AGVGVVVTLIALFSTLALVTF. His153 and Asp157 together coordinate Zn(2+). 2 helical membrane passes run 156–176 and 178–198; these read SDVMMNGAILVALGLSWYGWH and ADALFALGIGIYILYSALRMG.

The protein belongs to the cation diffusion facilitator (CDF) transporter (TC 2.A.4) family. FieF subfamily. Homodimer.

Its subcellular location is the cell inner membrane. The enzyme catalyses Zn(2+)(in) + H(+)(out) = Zn(2+)(out) + H(+)(in). It catalyses the reaction Cd(2+)(in) + H(+)(out) = Cd(2+)(out) + H(+)(in). It carries out the reaction Fe(2+)(in) + H(+)(out) = Fe(2+)(out) + H(+)(in). In terms of biological role, divalent metal cation transporter which exports Zn(2+), Cd(2+) and possibly Fe(2+). May be involved in zinc and iron detoxification by efflux. The protein is Cation-efflux pump FieF of Klebsiella pneumoniae (strain 342).